A 326-amino-acid polypeptide reads, in one-letter code: Amino acid--[acyl-carrier-protein] ligase 1 (326 aa).

C131 is a binding site for Zn(2+). ATP-binding positions include R159, E161, and 168-169 (RL). E176 is a Zn(2+) binding site. E176 is an an L-alpha-amino acid binding site. ATP is bound by residues K235 and 250 to 253 (ACMS). Position 279 (C279) interacts with Zn(2+). Residue R286 coordinates ATP.

The protein belongs to the class-II aminoacyl-tRNA synthetase family. Amino acid--[acyl-carrier-protein] ligase subfamily. In terms of assembly, homodimer. Zn(2+) is required as a cofactor.

It carries out the reaction an L-alpha-amino acid + holo-[ACP] + ATP = an L-alpha-aminoacyl-[ACP] + AMP + diphosphate. In terms of biological role, catalyzes the ATP-dependent activation of L-glycine and its transfer to the phosphopantetheine prosthetic group covalently attached to the vicinal carrier protein bsr0959 of yet unknown function. May participate in nonribosomal peptide synthesis or related processes. L-alanine is a poor substrate whereas L-serine or D-amino acids are not substrates for ATP-dependent activation. Does not display tRNA aminoacylation activity. The sequence is that of Amino acid--[acyl-carrier-protein] ligase 1 from Bradyrhizobium diazoefficiens (strain JCM 10833 / BCRC 13528 / IAM 13628 / NBRC 14792 / USDA 110).